The chain runs to 534 residues: Cytokinin dehydrogenase 1 (534 aa).

The signal sequence occupies residues 1–18; that stretch reads MAVVYYLLLAGLIACSHA. Asn-52, Asn-63, and Asn-89 each carry an N-linked (GlcNAc...) asparagine glycan. The FAD-binding PCMH-type domain maps to 65–245; sequence TSALPAAVLY…TRARIAVEPA (181 aa). FAD-binding residues include Phe-100, Gly-102, Arg-103, and Gly-104. His-105 bears the Pros-8alpha-FAD histidine mark. FAD-binding residues include Ser-106 and Gln-110. N-linked (GlcNAc...) asparagine glycosylation occurs at Asn-134. Residues Asp-169, Thr-174, Ser-180, Ile-184, and Ile-235 each coordinate FAD. Asp-169 contacts N(6)-dimethylallyladenine. Asp-169 lines the trans-zeatin pocket. Asn-294, Asn-323, and Asn-338 each carry an N-linked (GlcNAc...) asparagine glycan. Glu-381 is a N(6)-dimethylallyladenine binding site. Residue Glu-381 coordinates trans-zeatin. Asn-434 carries an N-linked (GlcNAc...) asparagine glycan. Ser-456 contacts trans-zeatin. FAD-binding residues include Tyr-491, Ser-527, and Gln-530.

The protein belongs to the oxygen-dependent FAD-linked oxidoreductase family. In terms of assembly, monomer. FAD is required as a cofactor. Glycosylated; with approximately 10 hexose residues per site. In terms of tissue distribution, expressed in immature kernels and unpollinated cobs. Weakly expressed in kernels harvested two weeks after anthesis.

The protein localises to the secreted. It is found in the extracellular space. It catalyses the reaction N(6)-dimethylallyladenine + A + H2O = 3-methyl-2-butenal + adenine + AH2. Its activity is regulated as follows. Competitive inhibition by phenylureas. Its function is as follows. Catalyzes the oxidation of cytokinins, a family of N(6)-substituted adenine derivatives that are plant hormones, where the substituent is an isopentenyl group. Cleaves trans-zeatin, N(6)-dimethylallyladenine (isopentenyladenine), isopentenyladenosine, zeatin riboside and cis-zeatin, but not dihydrozeatin, kinetin and benzylaminopurine. The chain is Cytokinin dehydrogenase 1 (CKX1) from Zea mays (Maize).